Consider the following 91-residue polypeptide: Large ribosomal subunit protein uL22 (91 aa).

It belongs to the universal ribosomal protein uL22 family. Part of the 50S ribosomal subunit.

Its function is as follows. This protein binds specifically to 23S rRNA; its binding is stimulated by other ribosomal proteins, e.g. L4, L17, and L20. It is important during the early stages of 50S assembly. It makes multiple contacts with different domains of the 23S rRNA in the assembled 50S subunit and ribosome. The globular domain of the protein is located near the polypeptide exit tunnel on the outside of the subunit, while an extended beta-hairpin is found that lines the wall of the exit tunnel in the center of the 70S ribosome. The sequence is that of Large ribosomal subunit protein uL22 (rplV) from Clover yellow edge phytoplasma.